Reading from the N-terminus, the 276-residue chain is 2-dehydro-3-deoxyphosphooctonate aldolase (276 aa).

Belongs to the KdsA family.

The protein localises to the cytoplasm. It carries out the reaction D-arabinose 5-phosphate + phosphoenolpyruvate + H2O = 3-deoxy-alpha-D-manno-2-octulosonate-8-phosphate + phosphate. It participates in carbohydrate biosynthesis; 3-deoxy-D-manno-octulosonate biosynthesis; 3-deoxy-D-manno-octulosonate from D-ribulose 5-phosphate: step 2/3. The protein operates within bacterial outer membrane biogenesis; lipopolysaccharide biosynthesis. The polypeptide is 2-dehydro-3-deoxyphosphooctonate aldolase (Xanthomonas axonopodis pv. citri (strain 306)).